Reading from the N-terminus, the 287-residue chain is Acetylglutamate kinase (287 aa).

Residues 70 to 71 (GG), arginine 92, and asparagine 184 contribute to the substrate site.

It belongs to the acetylglutamate kinase family. ArgB subfamily.

It localises to the cytoplasm. It catalyses the reaction N-acetyl-L-glutamate + ATP = N-acetyl-L-glutamyl 5-phosphate + ADP. It participates in amino-acid biosynthesis; L-arginine biosynthesis; N(2)-acetyl-L-ornithine from L-glutamate: step 2/4. Its function is as follows. Catalyzes the ATP-dependent phosphorylation of N-acetyl-L-glutamate. The polypeptide is Acetylglutamate kinase (Dinoroseobacter shibae (strain DSM 16493 / NCIMB 14021 / DFL 12)).